A 575-amino-acid chain; its full sequence is Homocysteine/cysteine synthase (575 aa).

Lys-376 is subject to N6-(pyridoxal phosphate)lysine.

This sequence belongs to the trans-sulfuration enzymes family. MET7 subfamily. Pyridoxal 5'-phosphate serves as cofactor.

It localises to the cytoplasm. It carries out the reaction O-acetyl-L-homoserine + methanethiol = L-methionine + acetate + H(+). The enzyme catalyses O-acetyl-L-homoserine + hydrogen sulfide = L-homocysteine + acetate. The catalysed reaction is O-acetyl-L-serine + hydrogen sulfide = L-cysteine + acetate. It participates in amino-acid biosynthesis; L-methionine biosynthesis via de novo pathway; L-homocysteine from O-acetyl-L-homoserine. Functionally, plays a role in inorganic sulfur assimilation during sulfur-limited conditions; catalyzes the conversion of O-acetyl-L-homoserine (OAH) into homocysteine in the methionine biosynthesis pathway. Also catalyzes the conversion of O-acetylserine (OAS) into cysteine, the last step in the cysteine biosynthesis pathway. However, it seems that in S.cerevisiae cysteine biosynthesis occurs exclusively through the cystathionine pathway and not via direct incorporation of sulfur into OAS. It therefore has no metabolic role in cysteine biosynthesis and may only have a regulatory role controlling OAS levels. This is Homocysteine/cysteine synthase from Saccharomyces cerevisiae (strain ATCC 204508 / S288c) (Baker's yeast).